The sequence spans 185 residues: MESNLSSFNKIEQQINGSRKISNYLIGGMLTIGGIGFILASISSYTGRDLLPLGNPSSLLFIPQGIIMGAYGVIANLLNIYLWYLVFINFGSGYNSFDKVSQSVEIKRKGLFKDIEVKLNFDEIKSVKLDISEGFNPRRRIALVLKGRKKALPLSGAGELKPLLQVEEEGARLAKFLNVNLEGLK.

Transmembrane regions (helical) follow at residues 24 to 44 (YLIG…SISS) and 66 to 86 (IIMG…WYLV).

It belongs to the Ycf4 family.

Its subcellular location is the cellular thylakoid membrane. Its function is as follows. Seems to be required for the assembly of the photosystem I complex. This chain is Photosystem I assembly protein Ycf4, found in Prochlorococcus marinus (strain MIT 9515).